Reading from the N-terminus, the 227-residue chain is UPF0758 protein llmg_1515 (227 aa).

One can recognise an MPN domain in the interval 103–225; sequence QVLSSKEYGM…YYSFRERDSN (123 aa). His174, His176, and Asp187 together coordinate Zn(2+). The JAMM motif signature appears at 174–187; sequence HNHPSGNLQPSQAD.

The protein belongs to the UPF0758 family.

The sequence is that of UPF0758 protein llmg_1515 from Lactococcus lactis subsp. cremoris (strain MG1363).